Consider the following 91-residue polypeptide: uncharacterized protein (91 aa).

The protein resides in the plastid. It localises to the cyanelle. This is an uncharacterized protein from Cyanophora paradoxa.